A 330-amino-acid polypeptide reads, in one-letter code: Phosphate acyltransferase (330 aa).

It belongs to the PlsX family. As to quaternary structure, homodimer. Probably interacts with PlsY.

It localises to the cytoplasm. It catalyses the reaction a fatty acyl-[ACP] + phosphate = an acyl phosphate + holo-[ACP]. The protein operates within lipid metabolism; phospholipid metabolism. In terms of biological role, catalyzes the reversible formation of acyl-phosphate (acyl-PO(4)) from acyl-[acyl-carrier-protein] (acyl-ACP). This enzyme utilizes acyl-ACP as fatty acyl donor, but not acyl-CoA. In Bacillus cereus (strain G9842), this protein is Phosphate acyltransferase.